We begin with the raw amino-acid sequence, 620 residues long: Chaperone protein HscA homolog (620 aa).

It belongs to the heat shock protein 70 family.

Chaperone involved in the maturation of iron-sulfur cluster-containing proteins. Has a low intrinsic ATPase activity which is markedly stimulated by HscB. The protein is Chaperone protein HscA homolog of Shewanella piezotolerans (strain WP3 / JCM 13877).